The following is a 227-amino-acid chain: Ribonuclease 3 (227 aa).

An RNase III domain is found at 6–128; sequence ASDYQQRIGY…VIAAIYLDAD (123 aa). Mg(2+) is bound at residue glutamate 41. Aspartate 45 is an active-site residue. 2 residues coordinate Mg(2+): aspartate 114 and glutamate 117. Glutamate 117 is an active-site residue. In terms of domain architecture, DRBM spans 155–225; it reads DPKTRLQEWL…ASHAIDQLDS (71 aa). Residues 203–212 are compositionally biased toward basic and acidic residues; that stretch reads GEGSSRRLAE. Residues 203-227 are disordered; sequence GEGSSRRLAEQDAASHAIDQLDSNK.

It belongs to the ribonuclease III family. In terms of assembly, homodimer. It depends on Mg(2+) as a cofactor.

Its subcellular location is the cytoplasm. The enzyme catalyses Endonucleolytic cleavage to 5'-phosphomonoester.. Digests double-stranded RNA. Involved in the processing of primary rRNA transcript to yield the immediate precursors to the large and small rRNAs (23S and 16S). Processes some mRNAs, and tRNAs when they are encoded in the rRNA operon. Processes pre-crRNA and tracrRNA of type II CRISPR loci if present in the organism. This is Ribonuclease 3 from Xylella fastidiosa (strain M23).